A 398-amino-acid chain; its full sequence is Acetate kinase (398 aa).

Mg(2+) is bound at residue Asn-9. Residue Lys-16 participates in ATP binding. Arg-90 contacts substrate. Asp-147 acts as the Proton donor/acceptor in catalysis. ATP is bound by residues 207–211 (HIGNG), 282–284 (DLR), and 330–334 (GVGEN). Glu-384 is a binding site for Mg(2+).

Belongs to the acetokinase family. In terms of assembly, homodimer. Mg(2+) is required as a cofactor. Requires Mn(2+) as cofactor.

Its subcellular location is the cytoplasm. It catalyses the reaction acetate + ATP = acetyl phosphate + ADP. It participates in metabolic intermediate biosynthesis; acetyl-CoA biosynthesis; acetyl-CoA from acetate: step 1/2. Its function is as follows. Catalyzes the formation of acetyl phosphate from acetate and ATP. Can also catalyze the reverse reaction. This Staphylococcus haemolyticus (strain JCSC1435) protein is Acetate kinase.